The chain runs to 491 residues: Ketol-acid reductoisomerase (NADP(+)) (491 aa).

The KARI N-terminal Rossmann domain occupies 15-208; it reads AQLGKCRFMG…GGHRAGVLES (194 aa). NADP(+) is bound by residues 45 to 48, arginine 68, arginine 76, serine 78, and 108 to 110; these read CGAQ and DKQ. The active site involves histidine 132. Residue glycine 158 coordinates NADP(+). KARI C-terminal knotted domains follow at residues 209 to 344 and 345 to 484; these read SFVA…TAPQ and FEGK…MTDM. Residues aspartate 217, glutamate 221, glutamate 389, and glutamate 393 each coordinate Mg(2+). Position 414 (serine 414) interacts with substrate.

It belongs to the ketol-acid reductoisomerase family. Requires Mg(2+) as cofactor.

It carries out the reaction (2R)-2,3-dihydroxy-3-methylbutanoate + NADP(+) = (2S)-2-acetolactate + NADPH + H(+). The enzyme catalyses (2R,3R)-2,3-dihydroxy-3-methylpentanoate + NADP(+) = (S)-2-ethyl-2-hydroxy-3-oxobutanoate + NADPH + H(+). It functions in the pathway amino-acid biosynthesis; L-isoleucine biosynthesis; L-isoleucine from 2-oxobutanoate: step 2/4. It participates in amino-acid biosynthesis; L-valine biosynthesis; L-valine from pyruvate: step 2/4. Functionally, involved in the biosynthesis of branched-chain amino acids (BCAA). Catalyzes an alkyl-migration followed by a ketol-acid reduction of (S)-2-acetolactate (S2AL) to yield (R)-2,3-dihydroxy-isovalerate. In the isomerase reaction, S2AL is rearranged via a Mg-dependent methyl migration to produce 3-hydroxy-3-methyl-2-ketobutyrate (HMKB). In the reductase reaction, this 2-ketoacid undergoes a metal-dependent reduction by NADPH to yield (R)-2,3-dihydroxy-isovalerate. The chain is Ketol-acid reductoisomerase (NADP(+)) from Salmonella agona (strain SL483).